Consider the following 150-residue polypeptide: 3-hydroxyacyl-[acyl-carrier-protein] dehydratase FabZ (150 aa).

His-54 is a catalytic residue.

It belongs to the thioester dehydratase family. FabZ subfamily.

It localises to the cytoplasm. It carries out the reaction a (3R)-hydroxyacyl-[ACP] = a (2E)-enoyl-[ACP] + H2O. Involved in unsaturated fatty acids biosynthesis. Catalyzes the dehydration of short chain beta-hydroxyacyl-ACPs and long chain saturated and unsaturated beta-hydroxyacyl-ACPs. This chain is 3-hydroxyacyl-[acyl-carrier-protein] dehydratase FabZ, found in Vibrio parahaemolyticus serotype O3:K6 (strain RIMD 2210633).